A 122-amino-acid polypeptide reads, in one-letter code: Large ribosomal subunit protein bL17 (122 aa).

It belongs to the bacterial ribosomal protein bL17 family. As to quaternary structure, part of the 50S ribosomal subunit. Contacts protein L32.

In Neisseria meningitidis serogroup B (strain ATCC BAA-335 / MC58), this protein is Large ribosomal subunit protein bL17.